Here is a 79-residue protein sequence, read N- to C-terminus: U-actitoxin-Bgr3d (79 aa).

Residues Met-1–Ala-21 form the signal peptide. A propeptide spanning residues Gln-22–Gln-38 is cleaved from the precursor. 3 disulfide bridges follow: Cys-44/Cys-76, Cys-46/Cys-69, and Cys-59/Cys-77.

It belongs to the sea anemone type 3 (BDS) potassium channel toxin family.

It localises to the secreted. It is found in the nematocyst. Functionally, potently and selectively inhibits voltage-gated potassium channels Kv11/KCNH/ERG. Acts as a gating-modifier toxin that shifts the voltage-dependence of ERG activation in the positive direction and suppresses its current amplitudes elicited by strong depolarizing pulses that maximally activate the channels. This Bunodosoma granuliferum (Red warty sea anemone) protein is U-actitoxin-Bgr3d.